The sequence spans 629 residues: Chaperone protein HtpG (629 aa).

The tract at residues methionine 1–arginine 336 is a; substrate-binding. The segment at glutamate 337–arginine 549 is b. Residues methionine 550 to arginine 629 form a c region.

This sequence belongs to the heat shock protein 90 family. Homodimer.

It localises to the cytoplasm. Molecular chaperone. Has ATPase activity. In Chlorobium chlorochromatii (strain CaD3), this protein is Chaperone protein HtpG.